The primary structure comprises 158 residues: 2-C-methyl-D-erythritol 2,4-cyclodiphosphate synthase (158 aa).

Residues aspartate 8 and histidine 10 each coordinate a divalent metal cation. 4-CDP-2-C-methyl-D-erythritol 2-phosphate-binding positions include aspartate 8–histidine 10 and histidine 34–serine 35. Residue histidine 42 participates in a divalent metal cation binding. Residues aspartate 56–glycine 58, phenylalanine 61–aspartate 65, threonine 132–glutamate 135, and phenylalanine 139 each bind 4-CDP-2-C-methyl-D-erythritol 2-phosphate.

This sequence belongs to the IspF family. As to quaternary structure, homotrimer. The cofactor is a divalent metal cation.

It carries out the reaction 4-CDP-2-C-methyl-D-erythritol 2-phosphate = 2-C-methyl-D-erythritol 2,4-cyclic diphosphate + CMP. The protein operates within isoprenoid biosynthesis; isopentenyl diphosphate biosynthesis via DXP pathway; isopentenyl diphosphate from 1-deoxy-D-xylulose 5-phosphate: step 4/6. Its function is as follows. Involved in the biosynthesis of isopentenyl diphosphate (IPP) and dimethylallyl diphosphate (DMAPP), two major building blocks of isoprenoid compounds. Catalyzes the conversion of 4-diphosphocytidyl-2-C-methyl-D-erythritol 2-phosphate (CDP-ME2P) to 2-C-methyl-D-erythritol 2,4-cyclodiphosphate (ME-CPP) with a corresponding release of cytidine 5-monophosphate (CMP). The chain is 2-C-methyl-D-erythritol 2,4-cyclodiphosphate synthase from Natranaerobius thermophilus (strain ATCC BAA-1301 / DSM 18059 / JW/NM-WN-LF).